Reading from the N-terminus, the 344-residue chain is DNA-directed RNA polymerase subunit alpha (344 aa).

The interval 1–246 (MPMERFLKDF…EFLFPLVDFE (246 aa)) is alpha N-terminal domain (alpha-NTD). Residues 259 to 344 (ESSNLLDMSI…VLSKNVKISE (86 aa)) form an alpha C-terminal domain (alpha-CTD) region.

The protein belongs to the RNA polymerase alpha chain family. Homodimer. The RNAP catalytic core consists of 2 alpha, 1 beta, 1 beta' and 1 omega subunit. When a sigma factor is associated with the core the holoenzyme is formed, which can initiate transcription.

The enzyme catalyses RNA(n) + a ribonucleoside 5'-triphosphate = RNA(n+1) + diphosphate. Functionally, DNA-dependent RNA polymerase catalyzes the transcription of DNA into RNA using the four ribonucleoside triphosphates as substrates. In Borreliella afzelii (strain PKo) (Borrelia afzelii), this protein is DNA-directed RNA polymerase subunit alpha.